Consider the following 214-residue polypeptide: Mediator of RNA polymerase II transcription subunit 29 (214 aa).

The disordered stretch occupies residues 1-78 (MMNQMGMHMQ…QQQSQQTEKV (78 aa)). Residues 15-34 (VPGGPGGPVGMAGGPVGGVG) are compositionally biased toward gly residues. Positions 44–74 (QMQQQQQVAAQQQQQQQQQQQAQAHQQQSQQ) are enriched in low complexity.

It belongs to the Mediator complex subunit 29 family. In terms of assembly, component of the Mediator complex.

Its subcellular location is the nucleus. In terms of biological role, component of the Mediator complex, a coactivator involved in the regulated transcription of nearly all RNA polymerase II-dependent genes. Mediator functions as a bridge to convey information from gene-specific regulatory proteins to the basal RNA polymerase II transcription machinery. Mediator is recruited to promoters by direct interactions with regulatory proteins and serves as a scaffold for the assembly of a functional preinitiation complex with RNA polymerase II and the general transcription factors. The sequence is that of Mediator of RNA polymerase II transcription subunit 29 (ix) from Aedes aegypti (Yellowfever mosquito).